Here is a 501-residue protein sequence, read N- to C-terminus: Dipeptide and tripeptide permease A (501 aa).

At 1 to 34 (MSTANNKPTESVSLNAFKQPKSFYLIFSIELWER) the chain is on the cytoplasmic side. A helical transmembrane segment spans residues 35–55 (FGYYGLQGIMAVYLVKQLGMS). The Periplasmic segment spans residues 56-59 (EADS). The chain crosses the membrane as a helical span at residues 60-80 (ITLFSSFSALVYGLVAIGGWL). Residues 81–89 (GDKVLGTKR) are Cytoplasmic-facing. The chain crosses the membrane as a helical span at residues 90-110 (VIMLGAIVLAIGYGLVAWSGH). D111 is a topological domain (periplasmic). The chain crosses the membrane as a helical span at residues 112–132 (VAIVYMGMATIAVGNGLFKAN). Over 133–153 (PSSLLSTCYAKDDPRLDGAFT) the chain is Cytoplasmic. A helical transmembrane segment spans residues 154 to 174 (MYYMSINIGSFFSMLATPWLA). The Periplasmic segment spans residues 175 to 178 (AKFG). A helical transmembrane segment spans residues 179–199 (WSVAFALSFVGMLITVVNFLF). The Cytoplasmic segment spans residues 200–217 (CRSWVKDYGSKPDFEAVH). The helical transmembrane segment at 218–238 (FGKLLATIAGVIVLIAIATWL) threads the bilayer. Over 239-246 (LHNQGIAR) the chain is Periplasmic. A helical transmembrane segment spans residues 247-267 (MVLGVIALGIVIIFGKEAFAM). Residues 268-274 (QGAARRK) lie on the Cytoplasmic side of the membrane. Residues 275–295 (MIVAFILMLEAIIFFVLYSQM) form a helical membrane-spanning segment. At 296–320 (PTSLNFFAIRNVEHTILGIAVEPEQ) the chain is on the periplasmic side. Residues 321–341 (YQALNPFWIIIGSPILAAIYN) traverse the membrane as a helical segment. The Cytoplasmic segment spans residues 342–352 (KMGDTLPMPTK). The chain crosses the membrane as a helical span at residues 353–373 (FAIGMVLCSGAFLVLPLGAKF). The Periplasmic segment spans residues 374–383 (ATDAGIVSVN). The chain crosses the membrane as a helical span at residues 384–404 (WLILSYGLQSIGELMISGLGL). The Cytoplasmic segment spans residues 405 to 414 (AMVAQLVPQR). Residues 415–435 (LMGFIMGSWFLTTAGANLIGG) traverse the membrane as a helical segment. Residues 436–459 (YVAGMMAVPENVTDPLMSLEVYGR) are Periplasmic-facing. Residues 460 to 480 (VFLQIGVATAVIAALMLITAP) form a helical membrane-spanning segment. Residues 481–501 (KLNRMTQDDEENAKAAKTATA) lie on the Cytoplasmic side of the membrane.

Belongs to the major facilitator superfamily. Proton-dependent oligopeptide transporter (POT/PTR) (TC 2.A.17) family. DtpA subfamily.

The protein localises to the cell inner membrane. Proton-dependent permease that transports di- and tripeptides. The sequence is that of Dipeptide and tripeptide permease A from Citrobacter koseri (strain ATCC BAA-895 / CDC 4225-83 / SGSC4696).